Reading from the N-terminus, the 491-residue chain is Glutamate--tRNA ligase (491 aa).

A 'HIGH' region motif is present at residues 12 to 22; it reads PSPTGTPHVGL. The segment at 111–134 is disordered; that stretch reads STPEEVEERHKAAGRDPKLGYDNF. The segment covering 117–134 has biased composition (basic and acidic residues); the sequence is EERHKAAGRDPKLGYDNF. A 'KMSKS' region motif is present at residues 256 to 260; sequence KLSKR. K259 is an ATP binding site.

This sequence belongs to the class-I aminoacyl-tRNA synthetase family. Glutamate--tRNA ligase type 1 subfamily. Monomer.

It localises to the cytoplasm. It catalyses the reaction tRNA(Glu) + L-glutamate + ATP = L-glutamyl-tRNA(Glu) + AMP + diphosphate. In terms of biological role, catalyzes the attachment of glutamate to tRNA(Glu) in a two-step reaction: glutamate is first activated by ATP to form Glu-AMP and then transferred to the acceptor end of tRNA(Glu). The protein is Glutamate--tRNA ligase of Rhodococcus jostii (strain RHA1).